Consider the following 172-residue polypeptide: Large ribosomal subunit protein uL10 (172 aa).

The protein belongs to the universal ribosomal protein uL10 family. As to quaternary structure, part of the ribosomal stalk of the 50S ribosomal subunit. The N-terminus interacts with L11 and the large rRNA to form the base of the stalk. The C-terminus forms an elongated spine to which L12 dimers bind in a sequential fashion forming a multimeric L10(L12)X complex.

Its function is as follows. Forms part of the ribosomal stalk, playing a central role in the interaction of the ribosome with GTP-bound translation factors. This Rhizobium etli (strain CIAT 652) protein is Large ribosomal subunit protein uL10.